A 613-amino-acid polypeptide reads, in one-letter code: Ectonucleoside triphosphate diphosphohydrolase 4 (613 aa).

The Cytoplasmic segment spans residues 1–33 (MGRIGISCLFPASWHFSISPVGCPRILNTNLRQ). Residues 34-54 (IVVISILAAAVSLLYFSVVII) traverse the membrane as a helical segment. At 55–559 (RSKYGWLSKD…AGHAHWRGVS (505 aa)) the chain is on the lumenal side. Glutamate 222 functions as the Proton acceptor in the catalytic mechanism. Cysteine 368 and cysteine 395 are disulfide-bonded. 2 N-linked (GlcNAc...) asparagine glycosylation sites follow: asparagine 404 and asparagine 407. Residues cysteine 461 and cysteine 490 are joined by a disulfide bond. The helical transmembrane segment at 560–580 (FVYNHYLFSGCFLVVLLSILL) threads the bilayer. Residues 581 to 613 (YLLRLRRIHRRAPRTGSLWMEEGLPSQKGPGPL) lie on the Cytoplasmic side of the membrane.

This sequence belongs to the GDA1/CD39 NTPase family. Ca(2+) serves as cofactor. Requires Mg(2+) as cofactor. Ubiquitous.

The protein resides in the cytoplasmic vesicle. It is found in the autophagosome membrane. The protein localises to the lysosome membrane. It localises to the golgi apparatus membrane. It carries out the reaction a ribonucleoside 5'-triphosphate + H2O = a ribonucleoside 5'-diphosphate + phosphate + H(+). The catalysed reaction is a ribonucleoside 5'-diphosphate + H2O = a ribonucleoside 5'-phosphate + phosphate + H(+). The enzyme catalyses UDP + H2O = UMP + phosphate + H(+). It catalyses the reaction UTP + H2O = UDP + phosphate + H(+). It carries out the reaction CTP + H2O = CDP + phosphate + H(+). The catalysed reaction is GDP + H2O = GMP + phosphate + H(+). The enzyme catalyses 5-methyl-UTP + H2O = 5-methyl-UDP + phosphate + H(+). Catalyzes the hydrolysis of nucleoside triphosphates and diphosphates in a calcium- or magnesium-dependent manner, with a preference for pyrimidines. Preferentially hydrolyzes UTP and TTP on UTP and TTP. AMP, ADP, ATP and UMP are not substrates. Preferentially activated by Ca(2+) over Mg(2+). In terms of biological role, has a broad substrate specificity with the ability of cleaving all nucleotide di- and triphosphates with the exception of adenosine di- and triphosphate (ADP and ATP). Preferentially hydrolyzes CTP, UDP, CDP, GTP and GDP. Can use either Ca(2+) or Mg(2+) equally. The polypeptide is Ectonucleoside triphosphate diphosphohydrolase 4 (Entpd4) (Mus musculus (Mouse)).